We begin with the raw amino-acid sequence, 379 residues long: Putative zinc metalloprotease BMEI0829 (379 aa).

H33 is a binding site for Zn(2+). E34 is a catalytic residue. Residue H37 participates in Zn(2+) binding. Helical transmembrane passes span 39–61 (LVAR…ELLG), 122–144 (VFAG…FALY), 305–327 (FDWL…LFPL), and 355–377 (IFYR…NDLF). The PDZ domain occupies 133–208 (TIAIFSVFFA…LNFTVERDGK (76 aa)).

The protein belongs to the peptidase M50B family. It depends on Zn(2+) as a cofactor.

It is found in the cell inner membrane. This is Putative zinc metalloprotease BMEI0829 from Brucella melitensis biotype 1 (strain ATCC 23456 / CCUG 17765 / NCTC 10094 / 16M).